The sequence spans 233 residues: Membrane steroid-binding protein 2 (233 aa).

A helical membrane pass occupies residues 23–43 (AFFTVLALAFAVYQVVSGFFV). Positions 70–167 (EITEEELKLY…SKYVKVGTIQ (98 aa)) constitute a Cytochrome b5 heme-binding domain. The interval 70 to 167 (EITEEELKLY…SKYVKVGTIQ (98 aa)) is steroid-binding. Composition is skewed to basic and acidic residues over residues 169-181 (KDGE…EPSE) and 202-224 (THDE…KDVA). Residues 169 to 233 (KDGEGKESSE…ATDDDDAAKE (65 aa)) are disordered. Threonine 225 bears the Phosphothreonine mark.

It belongs to the cytochrome b5 family. MAPR subfamily.

It is found in the cell membrane. This is Membrane steroid-binding protein 2 (MSBP2) from Arabidopsis thaliana (Mouse-ear cress).